A 558-amino-acid chain; its full sequence is Armadillo repeat-containing X-linked protein 5 (558 aa).

Basic and acidic residues-rich tracts occupy residues 1–14 (MVDSGTEARARGKA) and 139–156 (KSHDKANTGSRPDRREET). Disordered regions lie at residues 1–35 (MVDSGTEARARGKAEAGLQDGISGPATARVNGKTQ) and 139–165 (KSHDKANTGSRPDRREETSIGMKSSDE). Residues 300–339 (CKSRGFSLEPKEFDKLVALLKLTKDPFIHEIATMIMGISP) form an ARM 1 repeat. The disordered stretch occupies residues 369-388 (HPGALSMVDDSSESSEEPKS). ARM repeat units lie at residues 422-461 (IKFEDHYVITSYIPDFLTLLNKGSVKTKFYVLKVFSCLSK), 463-503 (HANT…NINF), and 520-558 (SELISIFQEAKQFGQKLQDLAEHSDPEVRDKVIRLILKL).

This sequence belongs to the eutherian X-chromosome-specific Armcx family.

The chain is Armadillo repeat-containing X-linked protein 5 (ARMCX5) from Homo sapiens (Human).